The primary structure comprises 522 residues: Serine/threonine-protein kinase BSK1-2 (522 aa).

The interval 1-54 (MGCCGSSLRVGSHAPEKPPRRARPPPPPPQPHHPRRPSFTLNAHQAAASSSAAS) is disordered. Gly2 carries the N-myristoyl glycine lipid modification. The Protein kinase domain occupies 79–338 (ANIVSESGEK…KLVSILQPLQ (260 aa)). ATP contacts are provided by residues 85–93 (SGEKAPNLV) and Lys111. The active-site Proton acceptor is the Asp205.

It belongs to the protein kinase superfamily. Ser/Thr protein kinase family.

It localises to the cell membrane. The catalysed reaction is L-seryl-[protein] + ATP = O-phospho-L-seryl-[protein] + ADP + H(+). The enzyme catalyses L-threonyl-[protein] + ATP = O-phospho-L-threonyl-[protein] + ADP + H(+). Probable serine/threonine kinase that functions as a positive regulator of plant immunity. May be involved in the regulation of pattern-triggered immunity (PTI). Does not seem to be involved in responses to brassinosteroid (BR) signaling. The sequence is that of Serine/threonine-protein kinase BSK1-2 from Oryza sativa subsp. japonica (Rice).